Here is a 275-residue protein sequence, read N- to C-terminus: 4-hydroxy-tetrahydrodipicolinate reductase (275 aa).

NAD(+) is bound by residues 13–18 and 108–110; these read GAAGKM and GTT. The active-site Proton donor/acceptor is histidine 164. Histidine 165 lines the (S)-2,3,4,5-tetrahydrodipicolinate pocket. Residue lysine 168 is the Proton donor of the active site. Residue 174 to 175 coordinates (S)-2,3,4,5-tetrahydrodipicolinate; the sequence is GT.

The protein belongs to the DapB family.

The protein localises to the cytoplasm. The enzyme catalyses (S)-2,3,4,5-tetrahydrodipicolinate + NAD(+) + H2O = (2S,4S)-4-hydroxy-2,3,4,5-tetrahydrodipicolinate + NADH + H(+). It carries out the reaction (S)-2,3,4,5-tetrahydrodipicolinate + NADP(+) + H2O = (2S,4S)-4-hydroxy-2,3,4,5-tetrahydrodipicolinate + NADPH + H(+). It participates in amino-acid biosynthesis; L-lysine biosynthesis via DAP pathway; (S)-tetrahydrodipicolinate from L-aspartate: step 4/4. Its function is as follows. Catalyzes the conversion of 4-hydroxy-tetrahydrodipicolinate (HTPA) to tetrahydrodipicolinate. The polypeptide is 4-hydroxy-tetrahydrodipicolinate reductase (Rippkaea orientalis (strain PCC 8801 / RF-1) (Cyanothece sp. (strain PCC 8801))).